Consider the following 100-residue polypeptide: Large ribosomal subunit protein uL23 (100 aa).

Belongs to the universal ribosomal protein uL23 family. Part of the 50S ribosomal subunit. Contacts protein L29, and trigger factor when it is bound to the ribosome.

Its function is as follows. One of the early assembly proteins it binds 23S rRNA. One of the proteins that surrounds the polypeptide exit tunnel on the outside of the ribosome. Forms the main docking site for trigger factor binding to the ribosome. This Pseudothermotoga lettingae (strain ATCC BAA-301 / DSM 14385 / NBRC 107922 / TMO) (Thermotoga lettingae) protein is Large ribosomal subunit protein uL23.